The chain runs to 454 residues: Glycosyl hydrolase family 109 protein (454 aa).

The segment at residues 1 to 29 is a signal peptide (tat-type signal); the sequence is MFAMKRREFIAASAAVAASSLLPQTPAWA. NAD(+)-binding positions include 43–44, Asp-65, 116–119, 136–137, and Asn-165; these read MR, WEYH, and EV. Position 194 (Tyr-194) interacts with substrate. 224–228 is an NAD(+) binding site; the sequence is SEARW. Residues Arg-229, 241–244, and Tyr-324 each bind substrate; that span reads YPSH. Tyr-241 contacts NAD(+).

The protein belongs to the Gfo/Idh/MocA family. Glycosyl hydrolase 109 subfamily. The cofactor is NAD(+). In terms of processing, predicted to be exported by the Tat system. The position of the signal peptide cleavage has not been experimentally proven.

Glycosidase. This Stenotrophomonas maltophilia (strain K279a) protein is Glycosyl hydrolase family 109 protein.